The primary structure comprises 310 residues: Methionyl-tRNA formyltransferase (310 aa).

109–112 serves as a coordination point for (6S)-5,6,7,8-tetrahydrofolate; that stretch reads SLLP.

The protein belongs to the Fmt family.

The catalysed reaction is L-methionyl-tRNA(fMet) + (6R)-10-formyltetrahydrofolate = N-formyl-L-methionyl-tRNA(fMet) + (6S)-5,6,7,8-tetrahydrofolate + H(+). Attaches a formyl group to the free amino group of methionyl-tRNA(fMet). The formyl group appears to play a dual role in the initiator identity of N-formylmethionyl-tRNA by promoting its recognition by IF2 and preventing the misappropriation of this tRNA by the elongation apparatus. The sequence is that of Methionyl-tRNA formyltransferase from Agathobacter rectalis (strain ATCC 33656 / DSM 3377 / JCM 17463 / KCTC 5835 / VPI 0990) (Eubacterium rectale).